We begin with the raw amino-acid sequence, 938 residues long: Isoleucine--tRNA ligase (938 aa).

Residues 58–68 (PYANGSIHIGH) carry the 'HIGH' region motif. Lys183 bears the N6-acetyllysine mark. Residue Glu561 coordinates L-isoleucyl-5'-AMP. Positions 602–606 (KMSKS) match the 'KMSKS' region motif. Lys605 is an ATP binding site. Zn(2+)-binding residues include Cys901, Cys904, Cys921, and Cys924.

This sequence belongs to the class-I aminoacyl-tRNA synthetase family. IleS type 1 subfamily. As to quaternary structure, monomer. The cofactor is Zn(2+).

The protein resides in the cytoplasm. It catalyses the reaction tRNA(Ile) + L-isoleucine + ATP = L-isoleucyl-tRNA(Ile) + AMP + diphosphate. In terms of biological role, catalyzes the attachment of isoleucine to tRNA(Ile). As IleRS can inadvertently accommodate and process structurally similar amino acids such as valine, to avoid such errors it has two additional distinct tRNA(Ile)-dependent editing activities. One activity is designated as 'pretransfer' editing and involves the hydrolysis of activated Val-AMP. The other activity is designated 'posttransfer' editing and involves deacylation of mischarged Val-tRNA(Ile). The sequence is that of Isoleucine--tRNA ligase from Escherichia coli O7:K1 (strain IAI39 / ExPEC).